Consider the following 157-residue polypeptide: Protein Smg homolog (157 aa).

This sequence belongs to the Smg family.

This Aliivibrio fischeri (strain MJ11) (Vibrio fischeri) protein is Protein Smg homolog.